The primary structure comprises 435 residues: Glutamate-1-semialdehyde 2,1-aminomutase (435 aa).

Lys-266 is subject to N6-(pyridoxal phosphate)lysine.

Belongs to the class-III pyridoxal-phosphate-dependent aminotransferase family. HemL subfamily. Homodimer. Requires pyridoxal 5'-phosphate as cofactor.

It localises to the cytoplasm. It carries out the reaction (S)-4-amino-5-oxopentanoate = 5-aminolevulinate. Its pathway is porphyrin-containing compound metabolism; protoporphyrin-IX biosynthesis; 5-aminolevulinate from L-glutamyl-tRNA(Glu): step 2/2. This chain is Glutamate-1-semialdehyde 2,1-aminomutase, found in Helicobacter hepaticus (strain ATCC 51449 / 3B1).